A 352-amino-acid polypeptide reads, in one-letter code: Holliday junction branch migration complex subunit RuvB (352 aa).

The tract at residues 4-191 is large ATPase domain (RuvB-L); sequence TDKFSAPDRV…FGIVARLEFY (188 aa). Residues Leu30, Arg31, Gly72, Lys75, Thr76, Thr77, 138-140, Arg181, Tyr191, and Arg228 each bind ATP; that span reads EDY. Thr76 serves as a coordination point for Mg(2+). The segment at 192-262 is small ATPAse domain (RuvB-S); it reads TAEELARIVT…IADAALAMLD (71 aa). Residues 265-352 form a head domain (RuvB-H) region; it reads RVGFDLMDRK…GDSGDLIDGE (88 aa). 3 residues coordinate DNA: Arg301, Arg320, and Arg325.

This sequence belongs to the RuvB family. Homohexamer. Forms an RuvA(8)-RuvB(12)-Holliday junction (HJ) complex. HJ DNA is sandwiched between 2 RuvA tetramers; dsDNA enters through RuvA and exits via RuvB. An RuvB hexamer assembles on each DNA strand where it exits the tetramer. Each RuvB hexamer is contacted by two RuvA subunits (via domain III) on 2 adjacent RuvB subunits; this complex drives branch migration. In the full resolvosome a probable DNA-RuvA(4)-RuvB(12)-RuvC(2) complex forms which resolves the HJ.

The protein resides in the cytoplasm. The enzyme catalyses ATP + H2O = ADP + phosphate + H(+). Its function is as follows. The RuvA-RuvB-RuvC complex processes Holliday junction (HJ) DNA during genetic recombination and DNA repair, while the RuvA-RuvB complex plays an important role in the rescue of blocked DNA replication forks via replication fork reversal (RFR). RuvA specifically binds to HJ cruciform DNA, conferring on it an open structure. The RuvB hexamer acts as an ATP-dependent pump, pulling dsDNA into and through the RuvAB complex. RuvB forms 2 homohexamers on either side of HJ DNA bound by 1 or 2 RuvA tetramers; 4 subunits per hexamer contact DNA at a time. Coordinated motions by a converter formed by DNA-disengaged RuvB subunits stimulates ATP hydrolysis and nucleotide exchange. Immobilization of the converter enables RuvB to convert the ATP-contained energy into a lever motion, pulling 2 nucleotides of DNA out of the RuvA tetramer per ATP hydrolyzed, thus driving DNA branch migration. The RuvB motors rotate together with the DNA substrate, which together with the progressing nucleotide cycle form the mechanistic basis for DNA recombination by continuous HJ branch migration. Branch migration allows RuvC to scan DNA until it finds its consensus sequence, where it cleaves and resolves cruciform DNA. The protein is Holliday junction branch migration complex subunit RuvB of Cupriavidus pinatubonensis (strain JMP 134 / LMG 1197) (Cupriavidus necator (strain JMP 134)).